Consider the following 887-residue polypeptide: MMNRFRKWLYKPKRSDPQLLARFYYADEELNQVAAELDSLDGRKDPQRCTLLVSQFRSCQDNVLNIINQIMDECIPQDRAPRDFCVKFPEEIRHDNLAGQLWFGAECLAAGSIIMNRELESMAMRPLAKELTRSLEDVRGALRDQALRDLNTYTEKMREALRHFDVLFAEFELSYVSAMVPVKSPREYYVQQEVIVLFCETVERALDFGYLTQDMIDDYEPALMFSIPRLAIVCGLVVYADGPLNLDRKVEDMSELFRPFHTLLRKIRDLLQTLTEEELHTLERNLCISQDVEFPIRADVQGPAALAPALSAPLPPEGPLSAKAKDPDAELACSMQYDDQELEQLSRMVHRAGDEMSSLLSPPIACQSPAHRPGAEGSPGGEASPGRPRLRSGSDEEERVFFMDDVEGTAEALARPESPAGPFGWAGSTWADPQEKGQGGPGGAAGISLPASEKEEDLSNNNLEAEGTDGASLAGTSSCSCLDSRLHLDGWEVGADDAETAEMIAHRTGGMKLSATVIFNPKSPTSLDSAVATQEAASEPVAEGMDGGPHKLSTGATNCLLHSCVCCGSCGDSREDVVERLREKCSPGGVIGASYAAGLAKASDRAPERQEEAPPPSEDASNGREPKAPTSDKCLPHTSGSQVDTASGLQGEAGVAGQQEPEARELHAGSPSAHEAPQALSGSSSSTAGSCSSDKMGPEAAPAATHAAPQATREKIRSRFHGSHDLIHRLFVCISGVADQLQTNYASDLRSILKTLFEVMATKPETDDKEKLRKVTQTLRSAALEDCALCQETLSSSELAAKTRDGDFEDPPEWVPDEACGFCTACKAPFTVIRRKHHCRSCGKIFCSRCSSHSAPLPRYGQVKPVRVCTHCYMFHVTPFYSDKAGL.

Lysine 87 is covalently cross-linked (Glycyl lysine isopeptide (Lys-Gly) (interchain with G-Cter in ubiquitin)). The disordered stretch occupies residues 308–327 (PALSAPLPPEGPLSAKAKDP). Phosphoserine is present on serine 334. Disordered regions lie at residues 354 to 396 (DEMS…GSDE) and 412 to 474 (ALAR…ASLA). Residue threonine 516 is modified to Phosphothreonine. Serine 586 is subject to Phosphoserine; by MAP2K. Positions 599 to 714 (LAKASDRAPE…THAAPQATRE (116 aa)) are disordered. Basic and acidic residues predominate over residues 602 to 612 (ASDRAPERQEE). The span at 638–648 (TSGSQVDTASG) shows a compositional bias: polar residues. Composition is skewed to low complexity over residues 681–693 (SGSSSSTAGSCSS) and 700–711 (AAPAATHAAPQA). The segment at 817-879 (DEACGFCTAC…THCYMFHVTP (63 aa)) adopts an FYVE-type zinc-finger fold. Zn(2+) contacts are provided by cysteine 823, cysteine 826, cysteine 839, cysteine 842, cysteine 847, cysteine 850, and cysteine 869. At threonine 870 the chain carries Phosphothreonine; by MAP2K. Cysteine 872 serves as a coordination point for Zn(2+).

It belongs to the lst-2 family. Interacts with TRIM3. In terms of processing, monoubiquitination at Lys-87 prevents binding to phosphatidylinositol 3-phosphate (PI3P) and localization to early endosome membranes.

Its subcellular location is the cytoplasm. It is found in the cytosol. The protein localises to the early endosome membrane. In terms of biological role, negative regulator of epidermal growth factor receptor (EGFR) signaling. Acts by promoting EGFR degradation in endosomes when not monoubiquitinated. The sequence is that of Lateral signaling target protein 2 homolog (ZFYVE28) from Homo sapiens (Human).